Here is a 338-residue protein sequence, read N- to C-terminus: MMAMNAKQPFGMHPVLQEPKFSSLHSGSEAMRRVCLPAPQLQGNIFGSFDESLLARAEALAAVDIVSHGKNHPFKPDATYHTMSSVPCTSTSPTVPISHPAALTSHPHHAVHQGLEGDLLEHISPTLSVSGLGAPEHSVMPAQIHPHHLGAMGHLHQAMGMSHPHAVAPHSAMPACLSDVESDPRELEAFAERFKQRRIKLGVTQADVGAALANLKIPGVGSLSQSTICRFESLTLSHNNMIALKPVLQAWLEEAEAAYREKNSKPELFNGSERKRKRTSIAAPEKRSLEAYFAIQPRPSSEKIAAIAEKLDLKKNVVRVWFCNQRQKQKRMKYSAVH.

Positions 56 to 65 match the POU-IV box motif; it reads RAEALAAVDI. The POU-specific domain maps to 179–256; it reads DVESDPRELE…VLQAWLEEAE (78 aa). Residues 274–333 constitute a DNA-binding region (homeobox); the sequence is RKRKRTSIAAPEKRSLEAYFAIQPRPSSEKIAAIAEKLDLKKNVVRVWFCNQRQKQKRMK.

Belongs to the POU transcription factor family. Class-4 subfamily. Interacts with ISL1. As to expression, brain.

It localises to the nucleus. The protein localises to the cytoplasm. Acts as a transcriptional activator. Acts by binding to sequences related to the consensus octamer motif 5'-ATGCAAAT-3' in the regulatory regions of its target genes. Involved in the auditory system development, required for terminal differentiation of hair cells in the inner ear. The polypeptide is POU domain, class 4, transcription factor 3 (Mus musculus (Mouse)).